The primary structure comprises 1191 residues: Phosphatidylinositol 3,4,5-trisphosphate 5-phosphatase 1 (1191 aa).

One can recognise an SH2 domain in the interval 8-104 (WNHGNITRSK…GLVTHLQYPV (97 aa)). Positions 122–148 (SVMSPPELPPRNIPMSAGPSEAKDLPL) are disordered. The SH3-binding 1 motif lies at 127-132 (PELPPR). S246 is modified (phosphoserine). Positions 915 to 918 (NPNY) match the NPXY motif 1 motif. The residue at position 918 (Y918) is a Phosphotyrosine. S935 bears the Phosphoserine mark. Y945 carries the phosphotyrosine modification. Disordered stretches follow at residues 947-994 (QLPK…EARP) and 1021-1191 (YGSV…TAMQ). The segment covering 962 to 972 (PPTPPSQPPLS) has biased composition (pro residues). At T964 the chain carries Phosphothreonine. S967 and S972 each carry phosphoserine. The SH3-binding 2 motif lies at 970 to 975 (PLSPKK). The interaction with DAB2 stretch occupies residues 1015–1029 (MFENPLYGSVSSFPK). Positions 1018 to 1021 (NPLY) match the NPXY motif 2 motif. Y1021 carries the post-translational modification Phosphotyrosine. Positions 1032–1046 (PRKEQESPKMLRKEP) are enriched in basic and acidic residues. The SH3-binding 3 motif lies at 1039–1050 (PKMLRKEPPPCP). Pro residues predominate over residues 1141 to 1150 (IPAPRPPLPV). The span at 1162 to 1184 (KGRDYRDNTELPHHGKHRQEEGL) shows a compositional bias: basic and acidic residues.

It belongs to the inositol 1,4,5-trisphosphate 5-phosphatase family. In terms of assembly, interacts with tyrosine phosphorylated form of SHC1. Interacts with tyrosine phosphorylated form of DOK1. Interacts with tyrosine phosphorylated form of DOK3. Interacts with tyrosine phosphorylated form of SLAMF1/CD150. Interacts with PTPN11/SHP-2 in response to IL-3. Interacts with receptor EPOR. Interacts with receptors MS4A2/FCER1B and FCER1G. Interacts with receptors FCGR2B and FCGR3. Interacts with receptor FCGR2A, leading to regulate gene expression during the phagocytic process. Interacts with GRB2. Interacts with PLCG1. Interacts with tyrosine kinases SRC and TEC. Interacts with CRKL. Interacts with c-Met/MET. Interacts with MILR1 (tyrosine-phosphorylated). Isoform 5 interacts with IL6ST/gp130. Can weakly interact (via NPXY motif 2) with DAB2 (via PID domain); the interaction is impaired by tyrosine phosphorylation of the NPXY motif. Interacts (via SH2 domain) with tyrosine phosphorylated KLRC1 (via ITIM). Interacts with MPL/TPOR. Post-translationally, tyrosine phosphorylated by the members of the SRC family after exposure to a diverse array of extracellular stimuli such as cytokines, growth factors, antibodies, chemokines, integrin ligands and hypertonic and oxidative stress. Phosphorylated upon IgG receptor FCGR2B-binding. Specifically expressed in immune and hematopoietic cells. Levels vary considerably within this compartment. Lost during erythropoiesis when erythroid cells become Ter119+. Increases substantially with T-cell maturation and when resting B-cells are activated. Also present in mature granulocytes, monocyte/macrophages, mast cells and platelets. Isoform 5 is the only form expressed in embryonic stem (ES) cells and is coexpressed with other isoforms in hematopoietic stem cells, and disappears with differentiation.

The protein localises to the cytoplasm. It is found in the cell membrane. Its subcellular location is the membrane raft. The protein resides in the cytoskeleton. It catalyses the reaction a 1,2-diacyl-sn-glycero-3-phospho-(1D-myo-inositol-3,4,5-trisphosphate) + H2O = a 1,2-diacyl-sn-glycero-3-phospho-(1D-myo-inositol-3,4-bisphosphate) + phosphate. The catalysed reaction is a 1,2-diacyl-sn-glycero-3-phospho-(1D-myo-inositol-4,5-bisphosphate) + H2O = a 1,2-diacyl-sn-glycero-3-phospho-(1D-myo-inositol 4-phosphate) + phosphate. It carries out the reaction 1D-myo-inositol 1,3,4,5-tetrakisphosphate + H2O = 1D-myo-inositol 1,3,4-trisphosphate + phosphate. Activated upon translocation to the sites of synthesis of PtdIns(3,4,5)P3 in the membrane. Phosphatidylinositol (PtdIns) phosphatase that specifically hydrolyzes the 5-phosphate of phosphatidylinositol-3,4,5-trisphosphate (PtdIns(3,4,5)P3) to produce PtdIns(3,4)P2, thereby negatively regulating the PI3K (phosphoinositide 3-kinase) pathways. Also able to hydrolyze the 5-phosphate of phosphatidylinositol-4,5-bisphosphate (PtdIns(4,5)P3) and inositol 1,3,4,5-tetrakisphosphate. Acts as a negative regulator of B-cell antigen receptor signaling. Mediates signaling from the FC-gamma-RIIB receptor (FCGR2B), playing a central role in terminating signal transduction from activating immune/hematopoietic cell receptor systems. Acts as a negative regulator of myeloid cell proliferation/survival and chemotaxis, mast cell degranulation, immune cells homeostasis, integrin alpha-IIb/beta-3 signaling in platelets and JNK signaling in B-cells. Regulates proliferation of osteoclast precursors, macrophage programming, phagocytosis and activation and is required for endotoxin tolerance. Involved in the control of cell-cell junctions, CD32a signaling in neutrophils and modulation of EGF-induced phospholipase C activity. Key regulator of neutrophil migration, by governing the formation of the leading edge and polarization required for chemotaxis. Modulates FCGR3/CD16-mediated cytotoxicity in NK cells. Mediates the activin/TGF-beta-induced apoptosis through its Smad-dependent expression. This is Phosphatidylinositol 3,4,5-trisphosphate 5-phosphatase 1 (Inpp5d) from Mus musculus (Mouse).